We begin with the raw amino-acid sequence, 326 residues long: Mitochondrial glycine transporter (326 aa).

Solcar repeat units follow at residues 45–134 (HPVI…SKQY), 141–225 (PTAL…TRTA), and 237–321 (LIPL…MMAR). 6 helical membrane passes run 51–76 (FLCG…TRLQ), 109–135 (GMSP…KQYF), 147–172 (VILG…TRYE), 200–223 (GLTA…SQTR), 241–267 (INFS…KTHM), and 296–314 (GSVP…AWTV).

The protein belongs to the mitochondrial carrier (TC 2.A.29) family. SLC25A38 subfamily.

It is found in the mitochondrion inner membrane. It carries out the reaction glycine(in) = glycine(out). Its function is as follows. Mitochondrial glycine transporter that imports glycine into the mitochondrial matrix. Plays an important role in providing glycine for the first enzymatic step in heme biosynthesis, the condensation of glycine with succinyl-CoA to produce 5-aminolevulinate (ALA) in the mitochondrial matrix. Required during erythropoiesis. In terms of biological role, plays a role as pro-apoptotic protein that induces caspase-dependent apoptosis. The sequence is that of Mitochondrial glycine transporter from Mus musculus (Mouse).